The sequence spans 119 residues: Small ribosomal subunit protein uS10 (119 aa).

At alanine 2 the chain carries N-acetylalanine. Residue lysine 4 forms a Glycyl lysine isopeptide (Lys-Gly) (interchain with G-Cter in ubiquitin) linkage. At lysine 8 the chain carries N6-succinyllysine; alternate. Lysine 8 participates in a covalent cross-link: Glycyl lysine isopeptide (Lys-Gly) (interchain with G-Cter in ubiquitin); alternate. Phosphothreonine is present on threonine 9. Lysine 34 and lysine 75 each carry N6-acetyllysine. Serine 93 carries the phosphoserine modification.

This sequence belongs to the universal ribosomal protein uS10 family. In terms of assembly, component of the 40S small ribosomal subunit. Post-translationally, polyubiquitinated by ZNF598 via 'Lys-63'-linked ubiquitin chains when a ribosome has stalled, initiating the ribosome quality control (RQC) pathway to degrade the potentially detrimental aberrant nascent polypeptide. Deubiquitinated by OTUD3 and USP21, antagonizing ZNF598 activity. In terms of processing, ufmylated by UFL1.

It is found in the cytoplasm. Functionally, component of the small ribosomal subunit. The ribosome is a large ribonucleoprotein complex responsible for the synthesis of proteins in the cell. This is Small ribosomal subunit protein uS10 (Rps20) from Rattus norvegicus (Rat).